A 410-amino-acid chain; its full sequence is Acetate kinase (410 aa).

Position 7 (asparagine 7) interacts with Mg(2+). Residue lysine 14 participates in ATP binding. Position 88 (arginine 88) interacts with substrate. The Proton donor/acceptor role is filled by aspartate 145. Residues 203–207 (HAGNG), 278–280 (DTR), and 326–330 (GIGEN) each bind ATP. Position 379 (glutamate 379) interacts with Mg(2+).

Belongs to the acetokinase family. Homodimer. Mg(2+) serves as cofactor. The cofactor is Mn(2+).

The protein resides in the cytoplasm. The enzyme catalyses acetate + ATP = acetyl phosphate + ADP. The protein operates within metabolic intermediate biosynthesis; acetyl-CoA biosynthesis; acetyl-CoA from acetate: step 1/2. Its function is as follows. Catalyzes the formation of acetyl phosphate from acetate and ATP. Can also catalyze the reverse reaction. The chain is Acetate kinase from Onion yellows phytoplasma (strain OY-M).